Here is a 471-residue protein sequence, read N- to C-terminus: UDP-glycosyltransferase 1 (471 aa).

The active-site Proton acceptor is His-15. An an anthocyanidin-binding site is contributed by His-15. The active-site Charge relay is Asp-124. UDP-alpha-D-glucose is bound by residues Thr-146, Ala-348, Gln-350, His-365, Trp-368, Asn-369, Ser-370, and Glu-373. Residue Ala-388 participates in an anthocyanidin binding. Residues Glu-389 and Gln-390 each contribute to the UDP-alpha-D-glucose site.

The protein belongs to the UDP-glycosyltransferase family. As to expression, expressed in roots. Detected in stems and leaves.

It catalyses the reaction a 7-hydroxyisoflavone + UDP-alpha-D-glucose = a 7-hydroxyisoflavone 7-O-beta-D-glucoside + UDP + H(+). Functionally, isoflavone 7-O-glucosyltransferase converting daidzein to daidzin, genistein to genistin and formononetin to ononin. Shows some activity toward the chalcone isoliquiritigenin, the flavanones liquiritigenin and naringenin, and the flavone apigenin, but not toward cyanidin, luteolin, kaempferol, quercetin, daidzin and puerarin. The protein is UDP-glycosyltransferase 1 of Pueraria montana var. lobata (Kudzu vine).